Here is a 476-residue protein sequence, read N- to C-terminus: Zinc finger CCCH domain-containing protein 6 (476 aa).

Over residues 1-10 the composition is skewed to low complexity; the sequence is MEQPHAAAAA. Residues 1-57 are disordered; sequence MEQPHAAAAAAGGGEGEGGASPDTGLEGPMWRMGLGGGGGGGGGGGGGDGDAAGRLP. Gly residues predominate over residues 34 to 51; sequence GLGGGGGGGGGGGGGDGD. C3H1-type zinc fingers lie at residues 59–87, 108–136, and 153–181; these read RPGEEDCVYYLRTGACGFGDRCRYNHPRD, RAGQPICEYYMKTGTCKFGTNCKYHHPKQ, and RLGEKECSYYMKTGQCKFGTTCKFHHPEF. The segment covering 290–301 has biased composition (polar residues); the sequence is SSTGQSSNNQQE. The disordered stretch occupies residues 290–309; the sequence is SSTGQSSNNQQEHGFPERPG. 2 C3H1-type zinc fingers span residues 307–335 and 353–381; these read RPGQPDCQYYMRTGDCKFGATCKYHHPRE and RPGAQPCAYYAQNGYCRYGVACKYDHPMG. The segment at 456 to 476 is disordered; sequence TMMRAQTNTTSGGSSSPGGGR.

Its subcellular location is the nucleus. The polypeptide is Zinc finger CCCH domain-containing protein 6 (Oryza sativa subsp. japonica (Rice)).